Here is a 448-residue protein sequence, read N- to C-terminus: Serine--tRNA ligase (448 aa).

L-serine is bound at residue 255–257 (TSE). 286-288 (RSE) is a binding site for ATP. Glu309 provides a ligand contact to L-serine. 373–376 (EISS) is a binding site for ATP. Position 408 (Ser408) interacts with L-serine.

The protein belongs to the class-II aminoacyl-tRNA synthetase family. Type-1 seryl-tRNA synthetase subfamily. Homodimer. The tRNA molecule binds across the dimer.

The protein resides in the cytoplasm. The enzyme catalyses tRNA(Ser) + L-serine + ATP = L-seryl-tRNA(Ser) + AMP + diphosphate + H(+). It catalyses the reaction tRNA(Sec) + L-serine + ATP = L-seryl-tRNA(Sec) + AMP + diphosphate + H(+). It functions in the pathway aminoacyl-tRNA biosynthesis; selenocysteinyl-tRNA(Sec) biosynthesis; L-seryl-tRNA(Sec) from L-serine and tRNA(Sec): step 1/1. Functionally, catalyzes the attachment of serine to tRNA(Ser). Is also able to aminoacylate tRNA(Sec) with serine, to form the misacylated tRNA L-seryl-tRNA(Sec), which will be further converted into selenocysteinyl-tRNA(Sec). This chain is Serine--tRNA ligase, found in Bordetella petrii (strain ATCC BAA-461 / DSM 12804 / CCUG 43448).